The following is a 420-amino-acid chain: 3-phosphoshikimate 1-carboxyvinyltransferase (420 aa).

Positions 20, 21, and 25 each coordinate 3-phosphoshikimate. Lys-20 provides a ligand contact to phosphoenolpyruvate. Phosphoenolpyruvate is bound by residues Gly-90 and Arg-118. 6 residues coordinate 3-phosphoshikimate: Ser-159, Ser-160, Gln-161, Ser-187, Asp-303, and Lys-330. Gln-161 contributes to the phosphoenolpyruvate binding site. Asp-303 acts as the Proton acceptor in catalysis. Phosphoenolpyruvate is bound by residues Arg-334, Arg-376, and Lys-402.

This sequence belongs to the EPSP synthase family. As to quaternary structure, monomer.

It localises to the cytoplasm. The enzyme catalyses 3-phosphoshikimate + phosphoenolpyruvate = 5-O-(1-carboxyvinyl)-3-phosphoshikimate + phosphate. It functions in the pathway metabolic intermediate biosynthesis; chorismate biosynthesis; chorismate from D-erythrose 4-phosphate and phosphoenolpyruvate: step 6/7. Catalyzes the transfer of the enolpyruvyl moiety of phosphoenolpyruvate (PEP) to the 5-hydroxyl of shikimate-3-phosphate (S3P) to produce enolpyruvyl shikimate-3-phosphate and inorganic phosphate. This Brachyspira hyodysenteriae (strain ATCC 49526 / WA1) protein is 3-phosphoshikimate 1-carboxyvinyltransferase.